The chain runs to 599 residues: Thiamine transporter THI72 (599 aa).

A run of 11 helical transmembrane segments spans residues 42–62 (WGFW…GMWI), 78–98 (IGAF…NSCP), 112–132 (FVFG…MSIV), 174–194 (LIGF…KPYH), 197–217 (YILI…VIYL), 280–300 (IVAL…GASA), 333–353 (FFCG…NCGF), 372–392 (GAIF…YNSS), 395–415 (FLTV…VMIC), 447–467 (AIVA…WEVN), and 484–504 (SFFS…LFPF). The tract at residues 553-599 (HEYKPESSDDELPELTKTSSENTKVFEIVHQKDNEKESSTSSEKQIA) is disordered. A phosphoserine mark is found at Ser560 and Ser572. Residues 579-590 (EIVHQKDNEKES) show a composition bias toward basic and acidic residues.

This sequence belongs to the purine-cytosine permease (2.A.39) family.

The protein localises to the membrane. Functionally, low affinity thiamine transporter responsible for intake of thiamine. It is possible that the primary function is the uptake of closely related compounds and that thiamine transport is a secondary activity of these proteins. This chain is Thiamine transporter THI72 (THI72), found in Saccharomyces cerevisiae (strain ATCC 204508 / S288c) (Baker's yeast).